Consider the following 350-residue polypeptide: Small ribosomal subunit biogenesis GTPase RsgA (350 aa).

Residues 1–30 (MSKRKLTQNQQRRIQSNNAKTLHRHQHRHK) form a disordered region. The span at 7 to 20 (TQNQQRRIQSNNAK) shows a compositional bias: polar residues. Residues 21-30 (TLHRHQHRHK) are compositionally biased toward basic residues. Residues 106-274 (HNQIVRPDYY…LIDSPGIREF (169 aa)) form the CP-type G domain. GTP-binding positions include 162–165 (NKAD) and 216–224 (GQSGVGKSS). Residues C298, C303, H305, and C311 each coordinate Zn(2+).

Belongs to the TRAFAC class YlqF/YawG GTPase family. RsgA subfamily. Monomer. Associates with 30S ribosomal subunit, binds 16S rRNA. Zn(2+) serves as cofactor.

Its subcellular location is the cytoplasm. Functionally, one of several proteins that assist in the late maturation steps of the functional core of the 30S ribosomal subunit. Helps release RbfA from mature subunits. May play a role in the assembly of ribosomal proteins into the subunit. Circularly permuted GTPase that catalyzes slow GTP hydrolysis, GTPase activity is stimulated by the 30S ribosomal subunit. The protein is Small ribosomal subunit biogenesis GTPase RsgA of Histophilus somni (strain 129Pt) (Haemophilus somnus).